The following is a 257-amino-acid chain: 8-demethyl-8-aminoriboflavin-5'-phosphate synthase (257 aa).

Residues 11–13 (TLR), 19–21 (SQT), 91–94 (ITLN), 132–136 (CGNED), and tyrosine 240 contribute to the FMN site.

This sequence belongs to the SsuE family. In terms of assembly, homotetramer.

It carries out the reaction FMN + L-glutamate + 3 A + O2 + H2O = 8-amino-8-demethylriboflavin 5'-phosphate + 2-oxoglutarate + 3 AH2 + CO2 + H(+). It participates in antibiotic biosynthesis. Involved in the biosynthesis of the riboflavin analog antibiotic roseoflavin (3,8-dimethylamino-riboflavin). Catalyzes the site-specific substitution of the C-8 methyl group of riboflavin-5'-phosphate (FMN) by an amino group to yield 8-amino-8-demethylriboflavin 5'-phosphate, via a combined oxidation, decarboxylation and transamination reaction. The catalysis is initiated by an oxidation step in which the C-8 methyl group on the dimethylbenzene ring of FMN is converted to a formyl group to yield the 8-demethyl-8-formylriboflavin-5'-phosphate (OHC-RP) intermediate. In the presence of thiamine, the formyl group is oxidized into a carboxyl group to yield the 8-demethyl-8-carboxyriboflavin-5'-phosphate (HO2C-RP) intermediate. Finally, in the presence of L-glutamate as an amino donor, decarboxylation and aminotransfer occur, resulting in production of 8-demethyl-8-aminoriboflavin-5'-phosphate. Addition of NAD (but not NADP) to the reaction increases the yield 1.7-fold. The reaction also proceeds without the addition of any electron acceptor, and it is possible that molecular oxygen serves this role. The protein is 8-demethyl-8-aminoriboflavin-5'-phosphate synthase of Streptomyces davaonensis (strain DSM 101723 / JCM 4913 / KCC S-0913 / 768).